Here is a 205-residue protein sequence, read N- to C-terminus: High frequency lysogenization protein HflD homolog (205 aa).

This sequence belongs to the HflD family.

The protein resides in the cytoplasm. Its subcellular location is the cell inner membrane. This Haemophilus influenzae (strain ATCC 51907 / DSM 11121 / KW20 / Rd) protein is High frequency lysogenization protein HflD homolog.